We begin with the raw amino-acid sequence, 116 residues long: Thioredoxin H-type (116 aa).

The Thioredoxin domain occupies 2-115 (AEEAQVIACH…HKIAVHAPIT (114 aa)). Catalysis depends on nucleophile residues cysteine 39 and cysteine 42. A disulfide bridge connects residues cysteine 39 and cysteine 42.

Belongs to the thioredoxin family. Plant H-type subfamily.

The protein resides in the cytoplasm. Its function is as follows. Participates in various redox reactions through the reversible oxidation of the active center dithiol to a disulfide. The H form is known to activate a number of cytosolic enzymes. The protein is Thioredoxin H-type of Fagopyrum esculentum (Common buckwheat).